Here is a 165-residue protein sequence, read N- to C-terminus: Cell division protein SepF (165 aa).

The interval 23-75 (DEYGDYAGDYETQETAPVATRSSKRESRPAPVSDLSERRRPASGPTGVVAELS) is disordered.

This sequence belongs to the SepF family. In terms of assembly, homodimer. Interacts with FtsZ.

It localises to the cytoplasm. In terms of biological role, cell division protein that is part of the divisome complex and is recruited early to the Z-ring. Probably stimulates Z-ring formation, perhaps through the cross-linking of FtsZ protofilaments. Its function overlaps with FtsA. This is Cell division protein SepF from Nocardioides sp. (strain ATCC BAA-499 / JS614).